Reading from the N-terminus, the 1002-residue chain is MSFWPFGQNLNHSNINKILDEYFHVLHELERINPSVGKAIPAIFNNVQERGTSDSLDSIPEEYSHGDEVKTARGDQKSRFEKDDQQERYEKEEEERSMNSSESSTTSFSSGSTSKTDLDEEDISNATAPMMVTTKNLDNSFIERMLVETELLNELSRQNKTLLDFICFGFFFDKKTNKKVNNMEYLVDQLMECISKIKTATTVDLNNLIDYQEQQQLDDSSQEDVYVESDTEQEEEKEDDNNSNNKKRRKRGSSSFGNDDINNNDDDDDANEDDESAYLTKATIISEIFSLDIWLISESLVKNQSYLNKIWSIINQPNFNSENSPLVPIFLKINQNLLLTRQDQYLNFIRTERSFVDDMLKHVDISLLMDFFLKIISTDKIESPTGIIELVYDQNLISKCLSFLNNKESPADIQACVGDFLKALIAISANAPLDDISIGPNSLTRQLASPESIAKLVDIMINQRGAALNTTVSIVIELIRKNNSDYDQVNLLTTTIKTHPPSNRDPIYLGYLLRKFSNHLSDFFQIILDIENDANIPLHENQLHEKFKPLGFERFKVVELIAELLHCSNMGLMNSKRAERIARRRDKVRSQLSHHLQDALNDLSIEEKEQLKTKHSPTRDTDHDLKNNNGKIDNDNNDNDDESDYGDEIDESFEIPYINMKQNIKLRTDPTVGDLFKIKLYDTRIVSKIMELFLTHPWNNFWHNVIFDIIQQIFNGRMDFSYNSFLVLSLFNLKSSYQFMTDIVISDEKGTDVSRFSPVIRDPNFDFKITTDFILRGYQDSYKFYELRKMNLGYMGHIVLIAEEVVKFSKLYKVELISPDIQVILQTEEWQYYSEEVLNETRMMYSKILGGGSYIDDGNGNIIPQLPDNTTVLTPNGDASNNNEILDSDTGSSNGTSGGGQLINVESLEEQLSLSTESDLHNKLREMLINRAQEDVDNKNTENGVFILGPPEDKNSNSNINNTNHNSNNSNNNDNNDNNDNDNDNTRNYNEDADNDNDYDHE.

Disordered stretches follow at residues 51–131 (GTSD…APMM), 214–273 (QQQL…ANED), 609–645 (EQLKTKHSPTRDTDHDLKNNNGKIDNDNNDNDDESDY), 868–901 (DNTTVLTPNGDASNNNEILDSDTGSSNGTSGGGQ), and 940–1002 (NTEN…YDHE). Residue Ser-58 is modified to Phosphoserine. The segment covering 62–97 (EYSHGDEVKTARGDQKSRFEKDDQQERYEKEEEERS) has biased composition (basic and acidic residues). Over residues 98–114 (MNSSESSTTSFSSGSTS) the composition is skewed to low complexity. Over residues 220–241 (SSQEDVYVESDTEQEEEKEDDN) the composition is skewed to acidic residues. Ser-255 is subject to Phosphoserine. Acidic residues predominate over residues 262 to 273 (NNNDDDDDANED). Basic and acidic residues predominate over residues 609–626 (EQLKTKHSPTRDTDHDLK). 2 positions are modified to phosphothreonine: Thr-613 and Thr-618. The span at 635 to 645 (DNNDNDDESDY) shows a compositional bias: acidic residues. Polar residues predominate over residues 868–885 (DNTTVLTPNGDASNNNEI). Positions 956–976 (SNSNINNTNHNSNNSNNNDNN) are enriched in low complexity. Over residues 991–1002 (EDADNDNDYDHE) the composition is skewed to acidic residues.

The protein belongs to the SAPS family. Associates with the SIT4 protein phosphatase catalytic subunit in a cell-cycle-dependent manner. Hyperphosphorylated in the absence of SIT4.

The protein resides in the cytoplasm. Functionally, positive regulator of protein phosphatase SIT4. Involved in directing expression of TOR-repressed genes and in dephosphorylation of NPR1 in response to nutrient starvation. Negatively modulates K(+) efflux of the cell by the Na(+)-K(+)/H(+) antiporter NHA1. The chain is SIT4-associating protein SAP155 (SAP155) from Saccharomyces cerevisiae (strain ATCC 204508 / S288c) (Baker's yeast).